We begin with the raw amino-acid sequence, 489 residues long: Homoserine O-acetyltransferase (489 aa).

Residues 63–435 (NALVICHALS…SPEGHDAFLL (373 aa)) enclose the AB hydrolase-1 domain. The active site involves S162. S162 serves as the catalytic Nucleophile. The segment at 247–272 (RFGRNVPDPSKRQNINGTERLPTPPN) is disordered. Catalysis depends on residues D401 and H430.

Belongs to the AB hydrolase superfamily. MetX family.

It catalyses the reaction L-homoserine + acetyl-CoA = O-acetyl-L-homoserine + CoA. The protein operates within amino-acid biosynthesis; L-methionine biosynthesis via de novo pathway; O-acetyl-L-homoserine from L-homoserine: step 1/1. Commits homoserine to the methionine biosynthesis pathway by catalyzing its O-acetylation. The chain is Homoserine O-acetyltransferase (metE) from Emericella nidulans (strain FGSC A4 / ATCC 38163 / CBS 112.46 / NRRL 194 / M139) (Aspergillus nidulans).